A 390-amino-acid polypeptide reads, in one-letter code: Putative nickel insertion protein (390 aa).

This sequence belongs to the LarC family.

This Myxococcus xanthus (strain DK1622) protein is Putative nickel insertion protein.